A 446-amino-acid polypeptide reads, in one-letter code: tRNA modification GTPase MnmE (446 aa).

Residues arginine 24, glutamate 81, and lysine 120 each contribute to the (6S)-5-formyl-5,6,7,8-tetrahydrofolate site. A TrmE-type G domain is found at 216–368 (GLHAVLIGPP…LHIRLRALAL (153 aa)). Asparagine 226 is a binding site for K(+). GTP is bound by residues 226–231 (NAGKSS), 245–251 (TDVAGTT), and 270–273 (DTAG). Residue serine 230 participates in Mg(2+) binding. 3 residues coordinate K(+): threonine 245, valine 247, and threonine 250. Residue threonine 251 participates in Mg(2+) binding. Position 446 (lysine 446) interacts with (6S)-5-formyl-5,6,7,8-tetrahydrofolate.

It belongs to the TRAFAC class TrmE-Era-EngA-EngB-Septin-like GTPase superfamily. TrmE GTPase family. As to quaternary structure, homodimer. Heterotetramer of two MnmE and two MnmG subunits. The cofactor is K(+).

It localises to the cytoplasm. Exhibits a very high intrinsic GTPase hydrolysis rate. Involved in the addition of a carboxymethylaminomethyl (cmnm) group at the wobble position (U34) of certain tRNAs, forming tRNA-cmnm(5)s(2)U34. The polypeptide is tRNA modification GTPase MnmE (Xanthomonas euvesicatoria pv. vesicatoria (strain 85-10) (Xanthomonas campestris pv. vesicatoria)).